Reading from the N-terminus, the 232-residue chain is MTTMKNRSQDDMVTGTLPKLKSSKEWLEPQSLSFMEALAKEDTDAAVQSILYRENYIMKELDKYLHHQDFLNTRRKEMLYKKWVERVADPLQKKIIEKVHSHKNIKKRRRQELDNFLKHSNKKGNAFIEHYDPKEYDPFYMSKEDPNFLKVIMPPFRDPLKKAQYDQDDEKRTLLQCETGKIYTMKEFKEIEKAQLHSRFPSISNSRQSMTPNGWLKVPMSYIESEFCKKSR.

It belongs to the FAM228 family.

The protein is Protein FAM228B (Fam228b) of Mus musculus (Mouse).